Reading from the N-terminus, the 174-residue chain is Co-chaperone protein HscB (174 aa).

One can recognise a J domain in the interval 2-74 (DYFTLFGLPA…LKRAEYMLSL (73 aa)).

Belongs to the HscB family. Interacts with HscA and stimulates its ATPase activity. Interacts with IscU.

In terms of biological role, co-chaperone involved in the maturation of iron-sulfur cluster-containing proteins. Seems to help targeting proteins to be folded toward HscA. The polypeptide is Co-chaperone protein HscB (Yersinia pseudotuberculosis serotype O:1b (strain IP 31758)).